The sequence spans 883 residues: Alanine--tRNA ligase (883 aa).

Positions 560, 564, 665, and 669 each coordinate Zn(2+).

The protein belongs to the class-II aminoacyl-tRNA synthetase family. It depends on Zn(2+) as a cofactor.

The protein localises to the cytoplasm. The catalysed reaction is tRNA(Ala) + L-alanine + ATP = L-alanyl-tRNA(Ala) + AMP + diphosphate. Functionally, catalyzes the attachment of alanine to tRNA(Ala) in a two-step reaction: alanine is first activated by ATP to form Ala-AMP and then transferred to the acceptor end of tRNA(Ala). Also edits incorrectly charged Ser-tRNA(Ala) and Gly-tRNA(Ala) via its editing domain. The polypeptide is Alanine--tRNA ligase (Mesomycoplasma hyopneumoniae (strain 232) (Mycoplasma hyopneumoniae)).